A 437-amino-acid chain; its full sequence is Na(+)/H(+) antiporter NhaA (437 aa).

The next 11 membrane-spanning stretches (helical) occupy residues 12-32 (SMNITASILLFVTAIAAAVIA), 65-85 (LTMIEFINDGLMTIFFLMVGL), 103-123 (ALPFIAACGGMVVPVVIYSMV), 133-153 (GLAIPMATDIAFSLGVLSLLG), 162-182 (IFLTAFAVVDDIGGILVIAIF), 186-206 (HVAYEYLLWAALLYVLLYFIG), 214-234 (IFFLVVGVVIWYLFLQSGIHS), 308-328 (GAVNYLVLPLFAFVNAGVMFS), 333-353 (VIGGVTLAVALGLLAGKFLGI), 377-397 (ISGVALLGGIGFTVSLFIANL), and 412-432 (LGVLSGTVMAGILGYLVLHWV).

The protein belongs to the NhaA Na(+)/H(+) (TC 2.A.33) antiporter family.

It localises to the cell inner membrane. The catalysed reaction is Na(+)(in) + 2 H(+)(out) = Na(+)(out) + 2 H(+)(in). In terms of biological role, na(+)/H(+) antiporter that extrudes sodium in exchange for external protons. This chain is Na(+)/H(+) antiporter NhaA, found in Bacteroides fragilis (strain ATCC 25285 / DSM 2151 / CCUG 4856 / JCM 11019 / LMG 10263 / NCTC 9343 / Onslow / VPI 2553 / EN-2).